The following is a 337-amino-acid chain: Phosphate acyltransferase (337 aa).

Belongs to the PlsX family. As to quaternary structure, homodimer. Probably interacts with PlsY.

It localises to the cytoplasm. The enzyme catalyses a fatty acyl-[ACP] + phosphate = an acyl phosphate + holo-[ACP]. The protein operates within lipid metabolism; phospholipid metabolism. Catalyzes the reversible formation of acyl-phosphate (acyl-PO(4)) from acyl-[acyl-carrier-protein] (acyl-ACP). This enzyme utilizes acyl-ACP as fatty acyl donor, but not acyl-CoA. This Hydrogenovibrio crunogenus (strain DSM 25203 / XCL-2) (Thiomicrospira crunogena) protein is Phosphate acyltransferase.